We begin with the raw amino-acid sequence, 234 residues long: Sugar fermentation stimulation protein homolog (234 aa).

Belongs to the SfsA family.

This Shewanella sp. (strain ANA-3) protein is Sugar fermentation stimulation protein homolog.